The following is a 197-amino-acid chain: Rac-like GTP-binding protein RHO1 (197 aa).

13–20 is a GTP binding site; it reads GDGAVGKT. The short motif at 35 to 43 is the Effector region element; that stretch reads YVPTVFDNF. Residues 60–64 and 118–121 each bind GTP; these read DTAGQ and TKLD. Residue C194 is modified to Cysteine methyl ester. C194 carries the S-geranylgeranyl cysteine lipid modification. A propeptide spans 195–197 (removed in mature form); it reads SIL.

Belongs to the small GTPase superfamily. Rho family.

Its subcellular location is the cytoplasm. The protein resides in the membrane. In terms of biological role, inactive GDP-bound Rho GTPases reside in the cytosol, are found in a complex with Rho GDP-dissociation inhibitors (Rho GDIs), and are released from the GDI protein in order to translocate to membranes upon activation. The polypeptide is Rac-like GTP-binding protein RHO1 (RHO1) (Beta vulgaris (Sugar beet)).